A 353-amino-acid polypeptide reads, in one-letter code: DNA polymerase IV (353 aa).

The region spanning 6 to 187 (IIHIDCDCFY…LPVTKLHGVG (182 aa)) is the UmuC domain. Mg(2+) is bound by residues D10 and D105. The active site involves E106.

Belongs to the DNA polymerase type-Y family. Monomer. The cofactor is Mg(2+).

The protein localises to the cytoplasm. It carries out the reaction DNA(n) + a 2'-deoxyribonucleoside 5'-triphosphate = DNA(n+1) + diphosphate. Its function is as follows. Poorly processive, error-prone DNA polymerase involved in untargeted mutagenesis. Copies undamaged DNA at stalled replication forks, which arise in vivo from mismatched or misaligned primer ends. These misaligned primers can be extended by PolIV. Exhibits no 3'-5' exonuclease (proofreading) activity. May be involved in translesional synthesis, in conjunction with the beta clamp from PolIII. This chain is DNA polymerase IV, found in Pseudomonas syringae pv. tomato (strain ATCC BAA-871 / DC3000).